A 741-amino-acid polypeptide reads, in one-letter code: Catalase-peroxidase (741 aa).

A signal peptide spans 1-23; sequence MLKKIVTALGMSGMLLASSNAIA. Residues 102–223 constitute a cross-link (tryptophyl-tyrosyl-methioninium (Trp-Tyr) (with M-249)); the sequence is WHDAGTYRIY…YAATQMGLIY (122 aa). His-103 acts as the Proton acceptor in catalysis. The tryptophyl-tyrosyl-methioninium (Tyr-Met) (with W-102) cross-link spans 223 to 249; that stretch reads YVNPEGPDGKPDIKGAASEIRQAFRAM. His-264 serves as a coordination point for heme b.

It belongs to the peroxidase family. Peroxidase/catalase subfamily. Homodimer or homotetramer. Heme b is required as a cofactor. Formation of the three residue Trp-Tyr-Met cross-link is important for the catalase, but not the peroxidase activity of the enzyme.

The catalysed reaction is H2O2 + AH2 = A + 2 H2O. It catalyses the reaction 2 H2O2 = O2 + 2 H2O. Functionally, bifunctional enzyme with both catalase and broad-spectrum peroxidase activity. This Francisella tularensis subsp. tularensis (strain FSC 198) protein is Catalase-peroxidase.